A 257-amino-acid chain; its full sequence is Tryptophan synthase alpha chain (257 aa).

Catalysis depends on proton acceptor residues glutamate 46 and aspartate 57.

This sequence belongs to the TrpA family. In terms of assembly, tetramer of two alpha and two beta chains.

The enzyme catalyses (1S,2R)-1-C-(indol-3-yl)glycerol 3-phosphate + L-serine = D-glyceraldehyde 3-phosphate + L-tryptophan + H2O. Its pathway is amino-acid biosynthesis; L-tryptophan biosynthesis; L-tryptophan from chorismate: step 5/5. The alpha subunit is responsible for the aldol cleavage of indoleglycerol phosphate to indole and glyceraldehyde 3-phosphate. This Parabacteroides distasonis (strain ATCC 8503 / DSM 20701 / CIP 104284 / JCM 5825 / NCTC 11152) protein is Tryptophan synthase alpha chain.